The following is a 330-amino-acid chain: Taste receptor type 2 member 117 (330 aa).

The Extracellular segment spans residues 1-16 (MKHFWKILSVISQSTL). Residues 17–37 (SVILIVELVIGIIGNGFMVLV) form a helical membrane-spanning segment. Residues 38–53 (HCMDWVKKKKMSLVNQ) lie on the Cytoplasmic side of the membrane. Residues 54–74 (ILTALSISRIFQLCLLFISLV) form a helical membrane-spanning segment. The Extracellular portion of the chain corresponds to 75-95 (INFSYTDLTTSSRMIQVMYNA). N-linked (GlcNAc...) asparagine glycosylation occurs at N76. A helical membrane pass occupies residues 96–116 (WILANHFSIWIATCLTVLYFL). At 117-135 (KIANFSNSFFLYLKWRVEK) the chain is on the cytoplasmic side. A helical transmembrane segment spans residues 136–156 (VVSVTLLVSLLLLILNILLTN). The Extracellular segment spans residues 157 to 190 (LETDMWTNEYQRNISCSFSSHYYAKCHRQVLRLH). N169 carries N-linked (GlcNAc...) asparagine glycosylation. The chain crosses the membrane as a helical span at residues 191 to 211 (IIFLSVPVVLSLSTFLLLIFS). Residues 212 to 239 (LWTHHKRMQQHVQGGRDARTTAHFKALQ) lie on the Cytoplasmic side of the membrane. A helical membrane pass occupies residues 240–260 (TVIAFFLLYSIFILSVLIQIW). Residues 261-269 (KYELLKKNL) are Extracellular-facing. Residues 270 to 290 (FVVFCEVVYIAFPTFHSYILI) form a helical membrane-spanning segment. Residues 291–330 (VGDMKLRQACLPLCIIAAEIQTTLCRNFRSLKYFRLCCIF) lie on the Cytoplasmic side of the membrane.

It belongs to the G-protein coupled receptor T2R family.

Its subcellular location is the membrane. In terms of biological role, putative taste receptor which may play a role in the perception of bitterness. In Mus musculus (Mouse), this protein is Taste receptor type 2 member 117.